A 272-amino-acid chain; its full sequence is 2-amino-3,7-dideoxy-D-threo-hept-6-ulosonate synthase (272 aa).

D33 serves as the catalytic Proton acceptor. 1-deoxy-D-threo-hexo-2,5-diulose 6-phosphate-binding positions include 33 to 37 and 153 to 155; these read DHGVS and YPR. Y153 serves as the catalytic Proton donor. The active-site Schiff-base intermediate with substrate is the K184. 1-deoxy-D-threo-hexo-2,5-diulose 6-phosphate-binding positions include 209 to 210 and 237 to 238; these read GG and GR.

It belongs to the DeoC/FbaB aldolase family. ADHS subfamily. Homodecamer.

It carries out the reaction 1-deoxy-D-threo-hexo-2,5-diulose 6-phosphate + L-aspartate 4-semialdehyde = 2,3-dioxopropyl phosphate + 2-amino-2,3,7-trideoxy-D-lyxo-hept-6-ulosonate. Its function is as follows. Catalyzes a transaldol reaction between 6-deoxy-5-ketofructose 1-phosphate (DKFP) and L-aspartate semialdehyde (ASA) with an elimination of hydroxypyruvaldehyde phosphate to yield 2-amino-3,7-dideoxy-D-threo-hept-6-ulosonate (ADH). Plays a key role in an alternative pathway of the biosynthesis of 3-dehydroquinate (DHQ), which is involved in the canonical pathway for the biosynthesis of aromatic amino acids. In Methanococcus maripaludis (strain C5 / ATCC BAA-1333), this protein is 2-amino-3,7-dideoxy-D-threo-hept-6-ulosonate synthase.